The primary structure comprises 80 residues: Exodeoxyribonuclease 7 small subunit (80 aa).

It belongs to the XseB family. Heterooligomer composed of large and small subunits.

It localises to the cytoplasm. It catalyses the reaction Exonucleolytic cleavage in either 5'- to 3'- or 3'- to 5'-direction to yield nucleoside 5'-phosphates.. Its function is as follows. Bidirectionally degrades single-stranded DNA into large acid-insoluble oligonucleotides, which are then degraded further into small acid-soluble oligonucleotides. This is Exodeoxyribonuclease 7 small subunit from Rickettsia canadensis (strain McKiel).